Consider the following 146-residue polypeptide: Large ribosomal subunit protein uL15 (146 aa).

The disordered stretch occupies residues 1-56; it reads MKLHELRAAEGANKASKRVGRGTGSGLGKTSGKGQNGQNSRSGGGVRPGFEGGQMP. Composition is skewed to gly residues over residues 21–35 and 42–52; these read RGTG…GKGQ and SGGGVRPGFEG.

It belongs to the universal ribosomal protein uL15 family. Part of the 50S ribosomal subunit.

Functionally, binds to the 23S rRNA. This Clostridium botulinum (strain Loch Maree / Type A3) protein is Large ribosomal subunit protein uL15.